A 128-amino-acid polypeptide reads, in one-letter code: uncharacterized protein (128 aa).

The region spanning 5-128 (SIHHIAIICS…DQLPLELYEQ (124 aa)) is the VOC domain. The a divalent metal cation site is built by H8, E56, H77, and E124.

This is an uncharacterized protein from Bacillus subtilis (strain 168).